Here is a 705-residue protein sequence, read N- to C-terminus: FAD-dependent monooxygenase ATEG_03635 (705 aa).

FAD-binding positions include 86–115 (DVLI…IVDK), valine 208, 308–310 (RFY), and serine 408.

It belongs to the PheA/TfdB FAD monooxygenase family. FAD is required as a cofactor.

It participates in secondary metabolite biosynthesis. FAD-dependent monooxygenase; part of the cluster A that mediates the biosynthesis of azasperpyranones, members of the azaphilone family that exhibit anti-cancer activities. Azasperpyranones are synthesized by 2 clusters, A and B. Cluster A is responsible for the production of the polyhydric phenol moiety while the azaphilonoid scaffold is produced by the cluster B. The non-reducing polyketide synthase ATEG_03629 produces 5-methyl orsellinic acid, which is then reduced to 5-methyl orsellinic aldehyde by the NRPS-like protein ATEG_03630. 5-methyl orsellinic aldehyde is then first hydroxylated by the FAD-dependent monooxygenase ATEG_03635 and subsequently hydroxylated by the cytochrome P450 monooxygenase ATEG_03631 to produce the unstable polyhydric phenol precursor of azasperpyranones. On the other hand, the polyketide synthase ATEG_07659 is responsible for producing the 3,5-dimethyloctadienone moiety from acetyl-CoA, three malonyl-CoA, and two S-adenosyl methionines (SAM). The 3,5-dimethyloctadienone moiety is then loaded onto the SAT domain of ATEG_07661 and extended with four malonyl-CoA and one SAM, which leads to the formation of 2,4-dihydroxy-6-(5,7-dimethyl-2-oxo-trans-3-trans-5-nonadienyl)-3-methylbenzaldehyde (compound 8) after reductive release and aldol condensation. The FAD-dependent monooxygenase ATEG_07662 is the next enzyme in the biosynthesis sequence and hydroxylates the side chain at the benzylic position of compound 8. In Aspergillus nidulans, afoF, the ortholog of the FAD-dependent oxygenase ATEG_07660, is the key enzyme for the biosynthesis of asperfuranone by catalyzing the hydroxylation at C-8 of to prevent the formation of a six-membered ring hemiacetal intermediate and thus facilitating the formation of a five-membered ring to produce asperfuranone. In Aspergillus terreus, ATEG_07660 is probably not functional, which leads to the formation of the six-membered ring hemiacetal intermediate presperpyranone instead of asperfuranone. Finally, ATEG_03636 is involved in the condensation of the polyhydric phenol moiety produced by cluster A and the perasperpyranone precursor produced by cluster B, to yield azasperpyranone A. Further modifications of azasperpyranone A result in the production of derivatives, including azasperpyranone B to F. This Aspergillus terreus (strain NIH 2624 / FGSC A1156) protein is FAD-dependent monooxygenase ATEG_03635.